A 477-amino-acid polypeptide reads, in one-letter code: UDP-N-acetylmuramate--L-alanine ligase (477 aa).

122 to 128 (GTHGKTT) contributes to the ATP binding site.

It belongs to the MurCDEF family.

It localises to the cytoplasm. The enzyme catalyses UDP-N-acetyl-alpha-D-muramate + L-alanine + ATP = UDP-N-acetyl-alpha-D-muramoyl-L-alanine + ADP + phosphate + H(+). It functions in the pathway cell wall biogenesis; peptidoglycan biosynthesis. Cell wall formation. The polypeptide is UDP-N-acetylmuramate--L-alanine ligase (Xylella fastidiosa (strain 9a5c)).